The chain runs to 95 residues: Aspartyl/glutamyl-tRNA(Asn/Gln) amidotransferase subunit C (95 aa).

This sequence belongs to the GatC family. As to quaternary structure, heterotrimer of A, B and C subunits.

It carries out the reaction L-glutamyl-tRNA(Gln) + L-glutamine + ATP + H2O = L-glutaminyl-tRNA(Gln) + L-glutamate + ADP + phosphate + H(+). The catalysed reaction is L-aspartyl-tRNA(Asn) + L-glutamine + ATP + H2O = L-asparaginyl-tRNA(Asn) + L-glutamate + ADP + phosphate + 2 H(+). Allows the formation of correctly charged Asn-tRNA(Asn) or Gln-tRNA(Gln) through the transamidation of misacylated Asp-tRNA(Asn) or Glu-tRNA(Gln) in organisms which lack either or both of asparaginyl-tRNA or glutaminyl-tRNA synthetases. The reaction takes place in the presence of glutamine and ATP through an activated phospho-Asp-tRNA(Asn) or phospho-Glu-tRNA(Gln). This is Aspartyl/glutamyl-tRNA(Asn/Gln) amidotransferase subunit C from Pseudomonas putida (strain ATCC 700007 / DSM 6899 / JCM 31910 / BCRC 17059 / LMG 24140 / F1).